Here is a 259-residue protein sequence, read N- to C-terminus: Steroidogenic acute regulatory-like protein 1 (259 aa).

Positions 1–20 (MTLLPFTCLILLYSLGSVMS) are cleaved as a signal peptide. Positions 43-254 (YATALKTCGE…NRRHFQNLKA (212 aa)) constitute an START domain.

The polypeptide is Steroidogenic acute regulatory-like protein 1 (strl-1) (Caenorhabditis elegans).